A 289-amino-acid polypeptide reads, in one-letter code: Pre-mRNA-splicing factor cwf23 (289 aa).

The 66-residue stretch at 9 to 74 folds into the J domain; it reads DYYELLGINE…QLRKAYDSER (66 aa). The segment covering 129 to 148 has biased composition (basic and acidic residues); sequence ESANLRRQRENRLREEQEQS. Disordered regions lie at residues 129 to 161 and 269 to 289; these read ESANLRRQRENRLREEQEQSKRRKQETPSSKIS and KQKHKQKQKENERKATSTMNA.

This sequence belongs to the DnaJ family. As to quaternary structure, belongs to the 40S cdc5-associated complex (or cwf complex), a spliceosome sub-complex reminiscent of a late-stage spliceosome composed of the U2, U5 and U6 snRNAs and at least brr2, cdc5, cwf2/prp3, cwf3/syf1, cwf4/syf3, cwf5/ecm2, spp42/cwf6, cwf7/spf27, cwf8, cwf9, cwf10, cwf11, cwf12, prp45/cwf13, cwf14, cwf15, cwf16, cwf17, cwf18, cwf19, cwf20, cwf21, cwf22, cwf23, cwf24, cwf25, cwf26, cyp7/cwf27, cwf28, cwf29/ist3, lea1, msl1, prp5/cwf1, prp10, prp12/sap130, prp17, prp22, sap61, sap62, sap114, sap145, slu7, smb1, smd1, smd3, smf1, smg1 and syf2.

It is found in the cytoplasm. The protein resides in the nucleus. Functionally, involved in pre-mRNA splicing. May be involved in endoplasmic reticulum-associated protein degradation (ERAD) and required for growth at low and high temperatures. This chain is Pre-mRNA-splicing factor cwf23 (cwf23), found in Schizosaccharomyces pombe (strain 972 / ATCC 24843) (Fission yeast).